Reading from the N-terminus, the 378-residue chain is Myoglobin (378 aa).

Histidine 332 contacts heme.

Belongs to the indoleamine 2,3-dioxygenase family. Homodimer. Requires heme as cofactor.

Serves a reserve supply of oxygen and facilitates the movement of oxygen within muscles. This Haliotis madaka (Giant abalone) protein is Myoglobin.